The following is a 417-amino-acid chain: MEDIIEGGISSDDDFDSSDSSSDEEESDTSPQIMKSDVTMASPPSTPEPSPDVSASTSNLKRERQRSPITWEHQSPLSRVYRSPSPMRFGKRPRISSNSTSRSCKTSWADRVREAAAQRRPSRPFRKPYSHPRNGPLRNGPPRAPPLLKLFDISILPKSGEPKLFLPVPSLPCQEAEKTNDKYVLAMAQRAMHDVPISSKQLTANLLPVKFKPLLSIVRYTPNYYYWVSMRKETIASANLCTVAAFLDESLCWGQQYLKNDFIFSENGKDIILDTSSALLSQLVHKIKMLPFCHCLMQTTPQDHIVKQVCYLIASNNRILDAVRYLQTSVIKSPIVLLLAYAVCLPAAIICTKNETQLYSHCMRILKEYRPGDVMNILHESLTQHLNKCPSSTCAYTTRAIVGTKANTTGLFFLPTQ.

Over residues Met1–Asp28 the composition is skewed to acidic residues. Residues Met1 to Arg143 are disordered. The segment at Arg64–Arg120 is interaction with RNA. The Nuclear localization signal signature appears at Arg88–Arg94. The segment covering Ser96–Ser107 has biased composition (low complexity). The interval Thr106–Arg120 is interaction with host ALYREF or mouse ALYREF2. Positions Trp108–Ala117 are enriched in basic and acidic residues. Positions Gln118 to Lys127 match the Nuclear localization signal motif. A compositionally biased stretch (basic residues) spans Arg120 to Ser130. Low complexity predominate over residues Pro132–Pro141. 4 residues coordinate Zn(2+): Cys295, His385, Cys389, and Cys394. Residues Cys295–Cys394 form a CHC2-type zinc finger.

The protein belongs to the HHV-1 ICP27 protein family. Homodimer. Homodimerization is required for transactivation. Interacts with host ALYREF and with mouse ALYREF2. Associates in a complex with RNA, and host export factors NXF1/TAP and ALYREF or ALYREF2; these interactions allow nuclear export of viral transcripts.

The protein resides in the host cytoplasm. It is found in the host nucleus. Its function is as follows. Probably acts as a viral splicing factor that regulates viral RNA splicing. Functions as a multifunctional regulator of the expression of viral lytic genes. Early protein that promotes the accumulation and nuclear export of viral intronless RNA transcripts by interacting with mRNAs and cellular export proteins. This is mRNA export factor ICP27 homolog (EJRF1) from Saimiriine herpesvirus 2 (strain 11) (SaHV-2).